The primary structure comprises 707 residues: Choline transporter-like protein 4 (707 aa).

The Cytoplasmic portion of the chain corresponds to 1-32 (MGEKQDPDKAYGKPAKYDPSFRGPIRNRSCTD). Residues 33–53 (IICCVLFFVFILGYIAVGLVA) traverse the membrane as a helical segment. At 54 to 226 (WVYGDPQQVL…KIFEDFAQSW (173 aa)) the chain is on the extracellular side. N-linked (GlcNAc...) asparagine glycans are attached at residues Asn67, Asn142, Asn184, and Asn195. Residues 227–247 (YWILAALGVALVLSLLFVLLL) traverse the membrane as a helical segment. The Cytoplasmic portion of the chain corresponds to 248–249 (RL). Residues 250 to 270 (VAGPLVFVLIIGVLGVLAYGI) form a helical membrane-spanning segment. Topologically, residues 271 to 306 (YHCWNEYRLLRDKGASISQLGFTTNLSAYSSVQETW) are extracellular. Asn295 carries N-linked (GlcNAc...) asparagine glycosylation. The helical transmembrane segment at 307-327 (LAALILLAVLEGILLLMLIFL) threads the bilayer. The Cytoplasmic portion of the chain corresponds to 328–355 (RQRIRIAIALLEEASRAVGQMMSTLFYP). Residues 356–376 (LVTFVLLLVCIAYWAMTALYL) form a helical membrane-spanning segment. Topologically, residues 377-452 (ATSGQPQYVL…GVLGLFWTIN (76 aa)) are extracellular. Asn390, Asn402, and Asn413 each carry an N-linked (GlcNAc...) asparagine glycan. The helical transmembrane segment at 453–473 (WVLALGQCVLAGAFASFYWAF) threads the bilayer. At 474–498 (HKPRDIPTFPLSSAFIRTLRYHTGS) the chain is on the cytoplasmic side. Residues 499-519 (LAFGALILTLVQIARAILEYI) form a helical membrane-spanning segment. Topologically, residues 520–557 (DHKLRGAQNPVARCIMCCFKCCLWCLEKFIKFLNRNAY) are extracellular. The helical transmembrane segment at 558-578 (IMIAIYGKNFCVSAKNAFMLL) threads the bilayer. Residues 579-594 (MRNIVRVVVLDKVTDL) are Cytoplasmic-facing. The chain crosses the membrane as a helical span at residues 595–615 (LLFFGKLLVVGGVGVLSFFFF). The Extracellular portion of the chain corresponds to 616–635 (TGRIQGLGKDFESPQLNYYW). Residues 636–656 (LPIMTSIMGAYVIASGFFSVF) traverse the membrane as a helical segment. The Cytoplasmic portion of the chain corresponds to 657–707 (GMCVDTLFLCFLEDLERNDGSLDRPYYMSKALLKILGKKNEVPSGDKKRKK).

This sequence belongs to the CTL (choline transporter-like) family. Post-translationally, N-glycosylated; N-glycosylation of Asn-677 and Asn-390 is required for a proper thiamine pyrophosphate uptake.

The protein localises to the membrane. Its subcellular location is the apical cell membrane. The enzyme catalyses choline(out) + n H(+)(in) = choline(in) + n H(+)(out). The catalysed reaction is thiamine diphosphate(out) = thiamine diphosphate(in). In terms of biological role, choline transporter that plays a role in the choline-acetylcholine system and is required to the efferent innervation of hair cells in the olivocochlear bundle for the maintenance of physiological function of outer hair cells and the protection of hair cells from acoustic injury. Also described as a thiamine pyrophosphate transporter in colon, may mediate the absorption of microbiota-generated thiamine pyrophosphate and contribute to host thiamine (vitamin B1) homeostasis. The polypeptide is Choline transporter-like protein 4 (Sus scrofa (Pig)).